Reading from the N-terminus, the 24-residue chain is Transaldolase (24 aa).

Belongs to the transaldolase family.

It localises to the cytoplasm. It catalyses the reaction D-sedoheptulose 7-phosphate + D-glyceraldehyde 3-phosphate = D-erythrose 4-phosphate + beta-D-fructose 6-phosphate. The protein operates within carbohydrate degradation; pentose phosphate pathway; D-glyceraldehyde 3-phosphate and beta-D-fructose 6-phosphate from D-ribose 5-phosphate and D-xylulose 5-phosphate (non-oxidative stage): step 2/3. Transaldolase is important for the balance of metabolites in the pentose-phosphate pathway. In Capsicum annuum var. annuum (Red pepper), this protein is Transaldolase.